Consider the following 93-residue polypeptide: MSTDTGVSLPSYEEDQGSKLIRKAKEAPFVPVGIAGFAAIVAYGLYKLKSRGNTKMSIHLIHMRVAAQGFVVGAMTVGMGYSMYREFWAKPKP.

The region spanning 1–93 (MSTDTGVSLP…YREFWAKPKP (93 aa)) is the HIG1 domain. S2 bears the N-acetylserine mark. At S8 the chain carries Phosphoserine. 2 consecutive transmembrane segments (helical) span residues 26–46 (EAPFVPVGIAGFAAIVAYGLY) and 60–80 (LIHMRVAAQGFVVGAMTVGMG).

Associates with cytochrome c oxidase (COX, complex IV); proposed complex component. Also associates with respiratory chain supercomplexes.

Its subcellular location is the mitochondrion membrane. It is found in the mitochondrion inner membrane. In terms of biological role, proposed subunit of cytochrome c oxidase (COX, complex IV), which is the terminal component of the mitochondrial respiratory chain that catalyzes the reduction of oxygen to water. May play a role in the assembly of respiratory supercomplexes. In Homo sapiens (Human), this protein is HIG1 domain family member 1A, mitochondrial (HIGD1A).